The primary structure comprises 67 residues: Copper transport protein ATOX1 homolog (67 aa).

Residues Met-1–Ser-64 form the HMA domain. 2 residues coordinate Cu cation: Cys-11 and Cys-14.

It belongs to the ATX1 family.

Its function is as follows. Could bind and deliver cytosolic copper to the copper ATPase proteins. May be important in cellular antioxidant defense. The chain is Copper transport protein ATOX1 homolog (atox1) from Dictyostelium discoideum (Social amoeba).